Reading from the N-terminus, the 452-residue chain is Tubulin alpha-1D chain (452 aa).

Positions 1-4 (MREC) match the MREC motif motif. Residue Gln11 coordinates GTP. Residue Lys40 is modified to N6-acetyllysine. Residues Glu71, Ser140, Gly144, Thr145, Thr179, Asn206, and Asn228 each coordinate GTP. Glu71 serves as a coordination point for Mg(2+). Glu254 is a catalytic residue. Tyr282 carries the 3'-nitrotyrosine modification. The interval 432-452 (YEEVGMDSVEGEGEEEEGDEY) is disordered. Ser439 bears the Phosphoserine mark. 5-glutamyl polyglutamate is present on Glu446. Tyr452 carries the 3'-nitrotyrosine modification.

The protein belongs to the tubulin family. As to quaternary structure, dimer of alpha and beta chains. A typical microtubule is a hollow water-filled tube with an outer diameter of 25 nm and an inner diameter of 15 nM. Alpha-beta heterodimers associate head-to-tail to form protofilaments running lengthwise along the microtubule wall with the beta-tubulin subunit facing the microtubule plus end conferring a structural polarity. Microtubules usually have 13 protofilaments but different protofilament numbers can be found in some organisms and specialized cells. The cofactor is Mg(2+). In terms of processing, some glutamate residues at the C-terminus are polyglycylated, resulting in polyglycine chains on the gamma-carboxyl group. Glycylation is mainly limited to tubulin incorporated into axonemes (cilia and flagella) whereas glutamylation is prevalent in neuronal cells, centrioles, axonemes, and the mitotic spindle. Both modifications can coexist on the same protein on adjacent residues, and lowering polyglycylation levels increases polyglutamylation, and reciprocally. Cilia and flagella glycylation is required for their stability and maintenance. Flagella glycylation controls sperm motility. Some glutamate residues at the C-terminus are polyglutamylated, resulting in polyglutamate chains on the gamma-carboxyl group. Polyglutamylation plays a key role in microtubule severing by spastin (SPAST). SPAST preferentially recognizes and acts on microtubules decorated with short polyglutamate tails: severing activity by SPAST increases as the number of glutamates per tubulin rises from one to eight, but decreases beyond this glutamylation threshold. Glutamylation is also involved in cilia motility. Post-translationally, acetylation of alpha chains at Lys-40 is located inside the microtubule lumen. This modification has been correlated with increased microtubule stability, intracellular transport and ciliary assembly. In terms of processing, methylation of alpha chains at Lys-40 is found in mitotic microtubules and is required for normal mitosis and cytokinesis contributing to genomic stability. Nitration of Tyr-452 is irreversible and interferes with normal dynein intracellular distribution. Post-translationally, undergoes a tyrosination/detyrosination cycle, the cyclic removal and re-addition of a C-terminal tyrosine residue by the enzymes tubulin tyrosine carboxypeptidase (MATCAP, VASH1 or VASH2) and tubulin tyrosine ligase (TTL), respectively. In terms of processing, tyrosination promotes microtubule interaction with CAP-Gly domain-containing proteins such as CLIP1, CLIP2 and DCTN1. Tyrosination regulates the initiation of dynein-dynactin motility via interaction with DCTN1, which brings the dynein-dynactin complex into contact with microtubules. In neurons, tyrosinated tubulins mediate the initiation of retrograde vesicle transport. Detyrosination is involved in metaphase plate congression by guiding chromosomes during mitosis: detyrosination promotes interaction with CENPE, promoting pole-proximal transport of chromosomes toward the equator. Detyrosination increases microtubules-dependent mechanotransduction in dystrophic cardiac and skeletal muscle. In cardiomyocytes, detyrosinated microtubules are required to resist to contractile compression during contraction: detyrosination promotes association with desmin (DES) at force-generating sarcomeres, leading to buckled microtubules and mechanical resistance to contraction.

The protein localises to the cytoplasm. It is found in the cytoskeleton. The catalysed reaction is GTP + H2O = GDP + phosphate + H(+). In terms of biological role, tubulin is the major constituent of microtubules, a cylinder consisting of laterally associated linear protofilaments composed of alpha- and beta-tubulin heterodimers. Microtubules grow by the addition of GTP-tubulin dimers to the microtubule end, where a stabilizing cap forms. Below the cap, tubulin dimers are in GDP-bound state, owing to GTPase activity of alpha-tubulin. The chain is Tubulin alpha-1D chain (TUBA1D) from Bos taurus (Bovine).